Reading from the N-terminus, the 127-residue chain is MAQSVPPGDIQTQPNAKIVFNAPYDDKHTYHIKVINSSARRIGYGIKTTNMKRLGVDPPCGVLDPKEAVLLAVSCDAFAFGQEDTNNDRITVEWTNTPDGAAKQFRREWFQGDGMVRRKNLPIEYNP.

Residue Ala-2 is modified to N-acetylalanine. One can recognise an MSP domain in the interval 9–126; it reads DIQTQPNAKI…RRKNLPIEYN (118 aa).

As to expression, sperm.

The protein resides in the cell projection. It localises to the pseudopodium. It is found in the cytoplasm. The protein localises to the cytoskeleton. Its function is as follows. Central component in molecular interactions underlying sperm crawling. Forms an extensive filament system that extends from sperm villipoda, along the leading edge of the pseudopod. The protein is Major sperm protein 10/36/56/76 (msp-10) of Caenorhabditis elegans.